The primary structure comprises 364 residues: Methylthioribose-1-phosphate isomerase (364 aa).

Residues 53–55, R90, and Q203 each bind substrate; that span reads RGA. Catalysis depends on D244, which acts as the Proton donor. Residue 254–255 participates in substrate binding; sequence NK.

The protein belongs to the eIF-2B alpha/beta/delta subunits family. MtnA subfamily.

The catalysed reaction is 5-(methylsulfanyl)-alpha-D-ribose 1-phosphate = 5-(methylsulfanyl)-D-ribulose 1-phosphate. It participates in amino-acid biosynthesis; L-methionine biosynthesis via salvage pathway; L-methionine from S-methyl-5-thio-alpha-D-ribose 1-phosphate: step 1/6. In terms of biological role, catalyzes the interconversion of methylthioribose-1-phosphate (MTR-1-P) into methylthioribulose-1-phosphate (MTRu-1-P). The polypeptide is Methylthioribose-1-phosphate isomerase (Brucella anthropi (strain ATCC 49188 / DSM 6882 / CCUG 24695 / JCM 21032 / LMG 3331 / NBRC 15819 / NCTC 12168 / Alc 37) (Ochrobactrum anthropi)).